The following is a 199-amino-acid chain: Ribonuclease P protein subunit p25 (199 aa).

The span at methionine 1 to glutamate 11 shows a compositional bias: basic and acidic residues. 2 disordered regions span residues methionine 1–phenylalanine 28 and leucine 144–alanine 199. Pro residues predominate over residues tyrosine 151 to alanine 166. Residues serine 172 and serine 182 each carry the phosphoserine modification.

It belongs to the histone-like Alba family. As to quaternary structure, component of nuclear RNase P and RNase MRP ribonucleoproteins. RNase P consists of a catalytic RNA moiety and 10 different protein chains; POP1, POP4, POP5, POP7, RPP14, RPP21, RPP25, RPP30, RPP38 and RPP40. Within the RNase P complex, POP1, POP7 and RPP25 form the 'finger' subcomplex, POP5, RPP14, RPP40 and homodimeric RPP30 form the 'palm' subcomplex, and RPP21, POP4 and RPP38 form the 'wrist' subcomplex. All subunits of the RNase P complex interact with the catalytic RNA. Several subunits of RNase P are also part of the RNase MRP complex. RNase MRP consists of a catalytic RNA moiety and about 8 protein subunits; POP1, POP7, RPP25, RPP30, RPP38, RPP40 and possibly also POP4 and POP5. POP7 forms a heterodimer with RPP25 that binds to the P3 stem loop of the catalytic RNA.

The protein resides in the nucleus. The protein localises to the nucleolus. In terms of biological role, component of ribonuclease P, a ribonucleoprotein complex that generates mature tRNA molecules by cleaving their 5'-ends. Also a component of the MRP ribonuclease complex, which cleaves pre-rRNA sequences. The sequence is that of Ribonuclease P protein subunit p25 (RPP25) from Homo sapiens (Human).